Consider the following 344-residue polypeptide: Flavonoid 7-O-methyltransferase 1A (344 aa).

Asp211 contributes to the S-adenosyl-L-methionine binding site. The active-site Proton acceptor is His249.

The protein belongs to the class I-like SAM-binding methyltransferase superfamily. Cation-independent O-methyltransferase family. In terms of assembly, homodimer.

The catalysed reaction is apigenin + S-adenosyl-L-methionine = genkwanin + S-adenosyl-L-homocysteine + H(+). It carries out the reaction luteolin + S-adenosyl-L-methionine = luteolin 7-methyl ether + S-adenosyl-L-homocysteine + H(+). The enzyme catalyses quercetin + S-adenosyl-L-methionine = rhamnetin + S-adenosyl-L-homocysteine + H(+). It catalyses the reaction (2S)-naringenin + S-adenosyl-L-methionine = (2S)-sakuranetin + S-adenosyl-L-homocysteine + H(+). The catalysed reaction is kaempferol + S-adenosyl-L-methionine = kaempferol 7-methyl ether + S-adenosyl-L-homocysteine + H(+). It carries out the reaction isorhamnetin + S-adenosyl-L-methionine = rhamnacene + S-adenosyl-L-homocysteine + H(+). The enzyme catalyses 4',7,8-trihydroxyflavone + S-adenosyl-L-methionine = 4',8-dihydroxy-7-methoxyflavone + S-adenosyl-L-homocysteine. It catalyses the reaction scutellarein + S-adenosyl-L-methionine = scutellarein 7-methyl ether + S-adenosyl-L-homocysteine. Its pathway is flavonoid metabolism. Flavonoid 7-O-methyltransferase involved in the biosynthesis of polymethoxylated flavonoids natural products such as pebrellin, aroma compounds which contribute to the flavor of peppermint, and exhibit pharmacological activities such as anti-allergic, anti-oxidant, antibacterial, anti-proliferative, and anti-inflammatory effects. Catalyzes S-adenosylmethionine-dependent regioselective 7-O-methylation of flavonoids; active on various hydroxylated flavonoid substrates, including luteolin (LUT), quercetin, kaempferol, isorhamnetin, apigenin (API), scutellarein (6-hydroxy-apigenin, 6-OH-API, SCU), 7,8,4'-trihydroxy-flavone and naringenin (NAR), and, with a lower efficiency, 7,8,3',4'-tetrahydroxy-flavone, taxifolin, hesperetin and genistein. The protein is Flavonoid 7-O-methyltransferase 1A of Mentha piperita (Peppermint).